The primary structure comprises 316 residues: Pantothenate kinase (316 aa).

Residue 95-102 (GSVAVGKS) coordinates ATP.

The protein belongs to the prokaryotic pantothenate kinase family.

The protein localises to the cytoplasm. The catalysed reaction is (R)-pantothenate + ATP = (R)-4'-phosphopantothenate + ADP + H(+). It functions in the pathway cofactor biosynthesis; coenzyme A biosynthesis; CoA from (R)-pantothenate: step 1/5. The sequence is that of Pantothenate kinase from Photorhabdus laumondii subsp. laumondii (strain DSM 15139 / CIP 105565 / TT01) (Photorhabdus luminescens subsp. laumondii).